An 82-amino-acid chain; its full sequence is Small ribosomal subunit protein bS20 (82 aa).

This sequence belongs to the bacterial ribosomal protein bS20 family.

Binds directly to 16S ribosomal RNA. The chain is Small ribosomal subunit protein bS20 from Streptococcus pyogenes serotype M12 (strain MGAS2096).